The primary structure comprises 301 residues: Phosducin-like protein (301 aa).

Position 2 is an N-acetylthreonine (Thr2). A disordered region spans residues 18–57 (SSSEDEDSDHEDKDRGRCAPASSSVPAEAELAGEGISVNT). Residues Ser20 and Ser25 each carry the phosphoserine modification. A compositionally biased stretch (low complexity) spans 36–49 (APASSSVPAEAELA). One can recognise a Phosducin domain in the interval 36-299 (APASSSVPAE…TCHSEDSDLE (264 aa)). Residues Ser226, Ser293, and Ser296 each carry the phosphoserine modification.

It belongs to the phosducin family. As to quaternary structure, forms a complex with the beta and gamma subunits of the GTP-binding protein, transducin. Interacts with the CCT chaperonin complex.

The protein resides in the cell projection. The protein localises to the cilium. Its function is as follows. Acts as a positive regulator of hedgehog signaling and regulates ciliary function. In terms of biological role, functions as a co-chaperone for CCT in the assembly of heterotrimeric G protein complexes, facilitates the assembly of both Gbeta-Ggamma and RGS-Gbeta5 heterodimers. Acts as a negative regulator of heterotrimeric G proteins assembly by trapping the preloaded G beta subunits inside the CCT chaperonin. The polypeptide is Phosducin-like protein (PDCL) (Homo sapiens (Human)).